The chain runs to 322 residues: Ferrochelatase (322 aa).

Positions 194 and 275 each coordinate Fe cation.

The protein belongs to the ferrochelatase family.

The protein resides in the cytoplasm. The catalysed reaction is heme b + 2 H(+) = protoporphyrin IX + Fe(2+). The protein operates within porphyrin-containing compound metabolism; protoheme biosynthesis; protoheme from protoporphyrin-IX: step 1/1. Catalyzes the ferrous insertion into protoporphyrin IX. This Yersinia enterocolitica protein is Ferrochelatase.